Consider the following 607-residue polypeptide: CUB and zona pellucida-like domain-containing protein 1 (607 aa).

Positions 1–19 (MEVTGRLFIWAILAVSCGA) are cleaved as a signal peptide. Cysteines 17 and 58 form a disulfide. CUB domains follow at residues 20 to 146 (QLNS…YFFS) and 154 to 265 (CGGD…YTSI). The Lumenal portion of the chain corresponds to 20–568 (QLNSTEAEGK…AEISNQPLSR (549 aa)). N-linked (GlcNAc...) asparagine glycosylation is found at Asn22, Asn57, and Asn67. Intrachain disulfides connect Cys85–Cys107, Cys154–Cys180, and Cys207–Cys229. The region spanning 276–519 (SCVSDKMRVI…SRCNQGCVPR (244 aa)) is the ZP domain. N-linked (GlcNAc...) asparagine glycosylation is present at Asn419. A disulfide bond links Cys442 and Cys498. A helical transmembrane segment spans residues 569 to 589 (LYLFSFMVLALNVVIVAITTV). Residues 590 to 607 (KHFLNRWMDHRYQKLQVY) are Cytoplasmic-facing.

As to expression, highly expressed in pancreatic acinar cells. Also expressed in epithelium of the uterus during late pregnancy but not detected in non-pregnant uterus or in a variety of other adult and fetal tissues.

It localises to the zymogen granule membrane. Localized to zymogen granules, where it functions in trypsinogen activation. May indirectly regulate cell motility, cell-cell and cell/extracellular matrix interactions. This is CUB and zona pellucida-like domain-containing protein 1 from Mus musculus (Mouse).